Here is a 348-residue protein sequence, read N- to C-terminus: MQFGELLAAVRKAQANVMLFLEEKEQAALSQANGIKAHLEYRSAEMEKSKQELETMAAISNTVQFLEEYCKFKNTEDITFPSVYIGLKDKLSGIRKVITESTVHLIQLLENYKKKLQEFSKEEEYDIRTQVSAIVQRKYWTSKPEPSTREQFLQYVHDITFDPDTAHKYLRLQEENRKVTNTTPWEHPYPDLPSRFLHWRQVLSQQSLYLHRYYFEVEIFGAGTYVGLTCKGIDQKGEERSSCISGNNFSWSLQWNGKEFTAWYSDMETPLKAGPFWRLGVYIDFPGGILSFYGVEYDSMTLVHKFACKFSEPVYAAFWLSKKENAIRIVDLGEEPEKPAPSLVGTAP.

In terms of domain architecture, B30.2/SPRY spans 139–337; it reads YWTSKPEPST…RIVDLGEEPE (199 aa).

The protein belongs to the TRIM/RBCC family.

It is found in the cytoplasm. In Homo sapiens (Human), this protein is Tripartite motif-containing protein 16-like protein (TRIM16L).